Here is a 354-residue protein sequence, read N- to C-terminus: Protein RecA (354 aa).

67 to 74 lines the ATP pocket; it reads GPESSGKT.

It belongs to the RecA family.

It localises to the cytoplasm. Can catalyze the hydrolysis of ATP in the presence of single-stranded DNA, the ATP-dependent uptake of single-stranded DNA by duplex DNA, and the ATP-dependent hybridization of homologous single-stranded DNAs. It interacts with LexA causing its activation and leading to its autocatalytic cleavage. The polypeptide is Protein RecA (Pasteurella multocida (strain Pm70)).